The following is a 285-amino-acid chain: Shikimate dehydrogenase (NADP(+)) (285 aa).

Shikimate contacts are provided by residues 20 to 22 (SLS) and Thr67. Lys71 (proton acceptor) is an active-site residue. Residue Glu83 coordinates NADP(+). Asn92 and Asp107 together coordinate shikimate. NADP(+)-binding positions include 132-136 (GAGGA) and Leu230. Tyr232 contributes to the shikimate binding site. Gly253 serves as a coordination point for NADP(+).

This sequence belongs to the shikimate dehydrogenase family. Homodimer.

The catalysed reaction is shikimate + NADP(+) = 3-dehydroshikimate + NADPH + H(+). It participates in metabolic intermediate biosynthesis; chorismate biosynthesis; chorismate from D-erythrose 4-phosphate and phosphoenolpyruvate: step 4/7. Involved in the biosynthesis of the chorismate, which leads to the biosynthesis of aromatic amino acids. Catalyzes the reversible NADPH linked reduction of 3-dehydroshikimate (DHSA) to yield shikimate (SA). The sequence is that of Shikimate dehydrogenase (NADP(+)) from Salinibacter ruber (strain DSM 13855 / M31).